The sequence spans 202 residues: ATP-dependent Clp protease proteolytic subunit (202 aa).

The Nucleophile role is filled by serine 107. The active site involves histidine 132.

It belongs to the peptidase S14 family. Fourteen ClpP subunits assemble into 2 heptameric rings which stack back to back to give a disk-like structure with a central cavity, resembling the structure of eukaryotic proteasomes.

The protein localises to the cytoplasm. The enzyme catalyses Hydrolysis of proteins to small peptides in the presence of ATP and magnesium. alpha-casein is the usual test substrate. In the absence of ATP, only oligopeptides shorter than five residues are hydrolyzed (such as succinyl-Leu-Tyr-|-NHMec, and Leu-Tyr-Leu-|-Tyr-Trp, in which cleavage of the -Tyr-|-Leu- and -Tyr-|-Trp bonds also occurs).. Functionally, cleaves peptides in various proteins in a process that requires ATP hydrolysis. Has a chymotrypsin-like activity. Plays a major role in the degradation of misfolded proteins. This chain is ATP-dependent Clp protease proteolytic subunit, found in Shewanella amazonensis (strain ATCC BAA-1098 / SB2B).